Consider the following 266-residue polypeptide: Ribosomal RNA small subunit methyltransferase A (266 aa).

S-adenosyl-L-methionine-binding residues include N11, L13, G37, E57, D85, and N104.

Belongs to the class I-like SAM-binding methyltransferase superfamily. rRNA adenine N(6)-methyltransferase family. RsmA subfamily.

Its subcellular location is the cytoplasm. The catalysed reaction is adenosine(1518)/adenosine(1519) in 16S rRNA + 4 S-adenosyl-L-methionine = N(6)-dimethyladenosine(1518)/N(6)-dimethyladenosine(1519) in 16S rRNA + 4 S-adenosyl-L-homocysteine + 4 H(+). Its function is as follows. Specifically dimethylates two adjacent adenosines (A1518 and A1519) in the loop of a conserved hairpin near the 3'-end of 16S rRNA in the 30S particle. May play a critical role in biogenesis of 30S subunits. The protein is Ribosomal RNA small subunit methyltransferase A of Campylobacter jejuni subsp. jejuni serotype O:2 (strain ATCC 700819 / NCTC 11168).